The sequence spans 298 residues: MADDWDLHAVVRGCSAVSSSATTTVYSPGVSSHTNPIFTVGRQSNAVSFGEIRDLYTPFTQESVVSSFSCINYPEEPRKPQNQKRPLSLSASSGSVTSKPSGSNTSRSKRRKIQHKKVCHVAAEALNSDVWAWRKYGQKPIKGSPYPRGYYRCSTSKGCLARKQVERNRSDPKMFIVTYTAEHNHPAPTHRNSLAGSTRQKPSDQQTSKSPTTTIATYSSSPVTSADEFVLPVEDHLAVGDLDGEEDLLSLSDTVVSDDFFDGLEEFAAGDSFSGNSAPASFDLSWVVNSAATTTGGI.

Disordered regions lie at residues 75–116 and 181–220; these read EEPR…IQHK and AEHN…TYSS. A compositionally biased stretch (low complexity) spans 88 to 103; it reads SLSASSGSVTSKPSGS. Positions 107-116 are enriched in basic residues; the sequence is RSKRRKIQHK. Residues 122-188 constitute a DNA-binding region (WRKY); the sequence is AAEALNSDVW…YTAEHNHPAP (67 aa). Over residues 190-220 the composition is skewed to polar residues; that stretch reads HRNSLAGSTRQKPSDQQTSKSPTTTIATYSS.

This sequence belongs to the WRKY group II-e family.

The protein localises to the nucleus. In terms of biological role, transcription factor involved in the expression of defense genes in innate immune response of plants. Interacts specifically with the W box (5'-(T)TGAC[CT]-3'), a frequently occurring elicitor-responsive cis-acting element. Activates WRKY 29, SIRK and its own promoters. The polypeptide is WRKY transcription factor 22 (WRKY22) (Arabidopsis thaliana (Mouse-ear cress)).